A 411-amino-acid chain; its full sequence is Multifunctional CCA protein (411 aa).

Positions 8 and 11 each coordinate ATP. 2 residues coordinate CTP: G8 and R11. Positions 21 and 23 each coordinate Mg(2+). Residues R91, R137, and R140 each contribute to the ATP site. Residues R91, R137, and R140 each contribute to the CTP site. The HD domain occupies C228 to W329.

This sequence belongs to the tRNA nucleotidyltransferase/poly(A) polymerase family. Bacterial CCA-adding enzyme type 1 subfamily. As to quaternary structure, monomer. Can also form homodimers and oligomers. The cofactor is Mg(2+). Ni(2+) is required as a cofactor.

The catalysed reaction is a tRNA precursor + 2 CTP + ATP = a tRNA with a 3' CCA end + 3 diphosphate. It carries out the reaction a tRNA with a 3' CCA end + 2 CTP + ATP = a tRNA with a 3' CCACCA end + 3 diphosphate. Functionally, catalyzes the addition and repair of the essential 3'-terminal CCA sequence in tRNAs without using a nucleic acid template. Adds these three nucleotides in the order of C, C, and A to the tRNA nucleotide-73, using CTP and ATP as substrates and producing inorganic pyrophosphate. tRNA 3'-terminal CCA addition is required both for tRNA processing and repair. Also involved in tRNA surveillance by mediating tandem CCA addition to generate a CCACCA at the 3' terminus of unstable tRNAs. While stable tRNAs receive only 3'-terminal CCA, unstable tRNAs are marked with CCACCA and rapidly degraded. The chain is Multifunctional CCA protein from Photobacterium profundum (strain SS9).